A 123-amino-acid polypeptide reads, in one-letter code: Ribonuclease P protein component (123 aa).

The protein belongs to the RnpA family. In terms of assembly, consists of a catalytic RNA component (M1 or rnpB) and a protein subunit.

It catalyses the reaction Endonucleolytic cleavage of RNA, removing 5'-extranucleotides from tRNA precursor.. RNaseP catalyzes the removal of the 5'-leader sequence from pre-tRNA to produce the mature 5'-terminus. It can also cleave other RNA substrates such as 4.5S RNA. The protein component plays an auxiliary but essential role in vivo by binding to the 5'-leader sequence and broadening the substrate specificity of the ribozyme. This is Ribonuclease P protein component from Streptomyces avermitilis (strain ATCC 31267 / DSM 46492 / JCM 5070 / NBRC 14893 / NCIMB 12804 / NRRL 8165 / MA-4680).